An 81-amino-acid polypeptide reads, in one-letter code: Cytotoxin 1 (81 aa).

Residues 1–21 (MKTLLLTLVVVTIVCLDLGYT) form the signal peptide. 4 disulfides stabilise this stretch: cysteine 24–cysteine 42, cysteine 35–cysteine 59, cysteine 63–cysteine 74, and cysteine 75–cysteine 80.

Belongs to the three-finger toxin family. Short-chain subfamily. Type IA cytotoxin sub-subfamily. In terms of assembly, monomer in solution; Homodimer and oligomer in the presence of negatively charged lipids forming a pore with a size ranging between 20 and 30 Angstroms. As to expression, expressed by the venom gland.

The protein resides in the secreted. It localises to the target cell membrane. Functionally, basic protein that binds to cell membrane and depolarizes cardiomyocytes. It also shows lytic activities on many other cells, including red blood cells. Interaction with sulfatides in the cell membrane induces pore formation and cell internalization and is responsible for cytotoxicity in cardiomyocytes. It targets the mitochondrial membrane and induces mitochondrial swelling and fragmentation. It binds to the integrin alpha-V/beta-3 (ITGAV/ITGB3) with a moderate affinity and inhibits protein kinases C. It also binds with high affinity to heparin. It also causes skeletal muscle necrosis after intramuscular injection into mice. This is Cytotoxin 1 from Naja atra (Chinese cobra).